A 199-amino-acid polypeptide reads, in one-letter code: Thymidine kinase (199 aa).

ATP contacts are provided by residues 23–30 and 95–98; these read GSMFSGKT and DEAQ. The active-site Proton acceptor is Glu96. The Zn(2+) site is built by Cys152, Cys155, Cys184, and Cys187.

It belongs to the thymidine kinase family. Homotetramer.

Its subcellular location is the cytoplasm. The enzyme catalyses thymidine + ATP = dTMP + ADP + H(+). The protein is Thymidine kinase of Bacteroides fragilis (strain YCH46).